Reading from the N-terminus, the 417-residue chain is Lipoyl synthase, mitochondrial (417 aa).

Residues 1 to 26 (MAVCARGLRCLGTPAVSLRLAASRSY) constitute a mitochondrion transit peptide. The disordered stretch occupies residues 27 to 61 (ATTTPPDPAIPNTPGAAATSSPAKRPRTSFQDKLN). Positions 44-58 (ATSSPAKRPRTSFQD) are enriched in polar residues. 7 residues coordinate [4Fe-4S] cluster: C134, C139, C145, C165, C169, C172, and S380. In terms of domain architecture, Radical SAM core spans 148-369 (GGSKSAATAT…KEKALEMGFL (222 aa)). The tract at residues 398-417 (ESTGPGSASVQDVATGDLVR) is disordered.

The protein belongs to the radical SAM superfamily. Lipoyl synthase family. Requires [4Fe-4S] cluster as cofactor.

The protein resides in the mitochondrion. The enzyme catalyses [[Fe-S] cluster scaffold protein carrying a second [4Fe-4S](2+) cluster] + N(6)-octanoyl-L-lysyl-[protein] + 2 oxidized [2Fe-2S]-[ferredoxin] + 2 S-adenosyl-L-methionine + 4 H(+) = [[Fe-S] cluster scaffold protein] + N(6)-[(R)-dihydrolipoyl]-L-lysyl-[protein] + 4 Fe(3+) + 2 hydrogen sulfide + 2 5'-deoxyadenosine + 2 L-methionine + 2 reduced [2Fe-2S]-[ferredoxin]. It participates in protein modification; protein lipoylation via endogenous pathway; protein N(6)-(lipoyl)lysine from octanoyl-[acyl-carrier-protein]: step 2/2. Catalyzes the radical-mediated insertion of two sulfur atoms into the C-6 and C-8 positions of the octanoyl moiety bound to the lipoyl domains of lipoate-dependent enzymes, thereby converting the octanoylated domains into lipoylated derivatives. The sequence is that of Lipoyl synthase, mitochondrial from Uncinocarpus reesii (strain UAMH 1704).